A 362-amino-acid chain; its full sequence is Mitochondrial distribution and morphology protein 12 (362 aa).

The SMP-LTD domain occupies 1 to 361 (MSFDINWSQL…WPSWLCFDMS (361 aa)). 2 disordered regions span residues 65–141 (DFYE…AATP) and 170–207 (TPSG…SKRG). 2 stretches are compositionally biased toward polar residues: residues 106–119 (VTLS…TQFA) and 170–187 (TPSG…MRTG). Residues 192–201 (PISNTPISSS) show a composition bias toward low complexity.

Belongs to the MDM12 family. In terms of assembly, component of the ER-mitochondria encounter structure (ERMES) or MDM complex, composed of MMM1, MDM10, MDM12 and MDM34. An MMM1 homodimer associates with one molecule of MDM12 on each side in a pairwise head-to-tail manner, and the SMP-LTD domains of MMM1 and MDM12 generate a continuous hydrophobic tunnel for phospholipid trafficking.

It is found in the mitochondrion outer membrane. The protein resides in the endoplasmic reticulum membrane. Its function is as follows. Component of the ERMES/MDM complex, which serves as a molecular tether to connect the endoplasmic reticulum (ER) and mitochondria. Components of this complex are involved in the control of mitochondrial shape and protein biogenesis, and function in nonvesicular lipid trafficking between the ER and mitochondria. MDM12 is required for the interaction of the ER-resident membrane protein MMM1 and the outer mitochondrial membrane-resident beta-barrel protein MDM10. The MDM12-MMM1 subcomplex functions in the major beta-barrel assembly pathway that is responsible for biogenesis of all mitochondrial outer membrane beta-barrel proteins, and acts in a late step after the SAM complex. The MDM10-MDM12-MMM1 subcomplex further acts in the TOM40-specific pathway after the action of the MDM12-MMM1 complex. Essential for establishing and maintaining the structure of mitochondria and maintenance of mtDNA nucleoids. In Meyerozyma guilliermondii (strain ATCC 6260 / CBS 566 / DSM 6381 / JCM 1539 / NBRC 10279 / NRRL Y-324) (Yeast), this protein is Mitochondrial distribution and morphology protein 12.